Reading from the N-terminus, the 596-residue chain is UvrABC system protein C (596 aa).

Residues 14 to 91 (QQPGCYLMKD…IKKYDPRYNV (78 aa)) form the GIY-YIG domain. The 36-residue stretch at 196–231 (KDIRKNLAGEMQKASEALNFERAKEIRDTIQHIDAT) folds into the UVR domain.

The protein belongs to the UvrC family. In terms of assembly, interacts with UvrB in an incision complex.

Its subcellular location is the cytoplasm. In terms of biological role, the UvrABC repair system catalyzes the recognition and processing of DNA lesions. UvrC both incises the 5' and 3' sides of the lesion. The N-terminal half is responsible for the 3' incision and the C-terminal half is responsible for the 5' incision. The protein is UvrABC system protein C of Oceanobacillus iheyensis (strain DSM 14371 / CIP 107618 / JCM 11309 / KCTC 3954 / HTE831).